The chain runs to 155 residues: Ribosomal RNA large subunit methyltransferase H (155 aa).

S-adenosyl-L-methionine contacts are provided by residues L72, G103, and 122–127 (LSDLTL).

It belongs to the RNA methyltransferase RlmH family. In terms of assembly, homodimer.

The protein localises to the cytoplasm. It carries out the reaction pseudouridine(1915) in 23S rRNA + S-adenosyl-L-methionine = N(3)-methylpseudouridine(1915) in 23S rRNA + S-adenosyl-L-homocysteine + H(+). Its function is as follows. Specifically methylates the pseudouridine at position 1915 (m3Psi1915) in 23S rRNA. The protein is Ribosomal RNA large subunit methyltransferase H of Acidovorax sp. (strain JS42).